We begin with the raw amino-acid sequence, 147 residues long: UPAR/Ly6 domain-containing protein CG9338 (147 aa).

Residues 1–23 (MVSSVKMILALTVLATVACTGYA) form the signal peptide. Topologically, residues 24–126 (IKCYQCDSLT…VCTEDECNGT (103 aa)) are extracellular. 5 disulfides stabilise this stretch: C26–C72, C29–C37, C51–C89, C101–C115, and C118–C123. A glycan (N-linked (GlcNAc...) asparagine) is linked at N68. The GPI-anchor amidated asparagine moiety is linked to residue N124. Positions 125–147 (GTSSLAPIAGVILLFFGLARLLA) are cleaved as a propeptide — removed in mature form. The helical transmembrane segment at 127–147 (SSLAPIAGVILLFFGLARLLA) threads the bilayer.

This sequence belongs to the quiver family.

The protein resides in the cell membrane. Functionally, may be involved in regulating neuron excitability. The polypeptide is UPAR/Ly6 domain-containing protein CG9338 (Drosophila melanogaster (Fruit fly)).